Reading from the N-terminus, the 195-residue chain is Ethylene-responsive transcription factor ERF018 (195 aa).

Residues 1–13 (MVKQAMKEEEKKR) are compositionally biased toward basic and acidic residues. The segment at 1–22 (MVKQAMKEEEKKRNTAMQSKYK) is disordered. Positions 20–77 (KYKGVRKRKWGKWVSEIRLPHSRERIWLGSYDTPEKAARAFDAAQFCLRGGDANFNFP) form a DNA-binding region, AP2/ERF.

The protein belongs to the AP2/ERF transcription factor family. ERF subfamily.

Its subcellular location is the nucleus. Its function is as follows. Probably acts as a transcriptional activator. Binds to the GCC-box pathogenesis-related promoter element. May be involved in the regulation of gene expression by stress factors and by components of stress signal transduction pathways. The sequence is that of Ethylene-responsive transcription factor ERF018 (ERF018) from Arabidopsis thaliana (Mouse-ear cress).